Reading from the N-terminus, the 242-residue chain is MEGWQRAFVLHSRPWSETSLMLDVFTEESGRVRLVAKGARSKRSTLKGALQPFTPLLLRFGGRGEVKTLRSAEAVSLALPLSGITLYSGLYINELLSRVLEYETRFSELFFDYLHCIQSLAGATGTPEPALRRFELALLGHLGYGVNFTHCAGSGEPVDGTMTYRYREEKGFIASVVIDNKTFTGRQLKALNAREFPDADTLRAAKRFTRMALKPYLGGKPLKSRELFRQFMPKRTVKTHYE.

The protein belongs to the RecO family. Monomer.

Functionally, involved in DNA repair and RecF pathway recombination. This Shigella flexneri serotype 5b (strain 8401) protein is DNA repair protein RecO.